An 801-amino-acid chain; its full sequence is Phenylalanine--tRNA ligase beta subunit (801 aa).

Residues 39–153 enclose the tRNA-binding domain; the sequence is AEGLSKLVVG…EEAVPGDAIF (115 aa). In terms of domain architecture, B5 spans 406–481; that stretch reads TEPVEVSTSL…RIYGYDKLPT (76 aa). Asp459, Asp465, Glu468, and Glu469 together coordinate Mg(2+). The region spanning 708–801 is the FDX-ACB domain; sequence TKFPAMTRDI…LTEQVGAEVR (94 aa).

It belongs to the phenylalanyl-tRNA synthetase beta subunit family. Type 1 subfamily. Tetramer of two alpha and two beta subunits. Mg(2+) is required as a cofactor.

It localises to the cytoplasm. The enzyme catalyses tRNA(Phe) + L-phenylalanine + ATP = L-phenylalanyl-tRNA(Phe) + AMP + diphosphate + H(+). This is Phenylalanine--tRNA ligase beta subunit from Streptococcus pyogenes serotype M18 (strain MGAS8232).